Consider the following 470-residue polypeptide: Calcium/manganese antiporter SLC30A10 (470 aa).

The Cytoplasmic segment spans residues 1–10; the sequence is MGRYSGKTCR. The helical transmembrane segment at 11-31 threads the bilayer; it reads LLFMLVLTAAFFVAELVSGYL. Residues 32 to 34 lie on the Extracellular side of the membrane; that stretch reads GNS. A helical transmembrane segment spans residues 35–55; sequence IALLSDSFNMLSDLISLCVGL. At 56 to 81 the chain is on the cytoplasmic side; that stretch reads GSGYIARRGPRGSSATYGYVRAEVVG. The chain crosses the membrane as a helical span at residues 82 to 102; that stretch reads ALSNAVFLTALCFTIFVEAVL. Over 103–113 the chain is Extracellular; sequence RLARPERIDDP. The chain crosses the membrane as a helical span at residues 114–134; that stretch reads ELVLIVGALGLAVNVVGLLIF. Residues 135–233 are Cytoplasmic-facing; sequence QDCGACFSRC…KSEALNIRGV (99 aa). Residues 146–223 are disordered; that stretch reads RGRRTRPSQQ…EPEETTKKEK (78 aa). Over residues 171–184 the composition is skewed to low complexity; that stretch reads AATATAPGSGTAVT. Residues 234-254 traverse the membrane as a helical segment; sequence LLHVMGDALGSVVVVITAIIF. Residues 255–270 lie on the Extracellular side of the membrane; that stretch reads YVQPLRREDPCNWQCY. The chain crosses the membrane as a helical span at residues 271 to 291; sequence IDPSLTVVMVIIILSSAFPLI. The Cytoplasmic portion of the chain corresponds to 292–470; that stretch reads KETAVILLQM…RQHYENSTHF (179 aa). Residues 300-470 form a required for plasma membrane localization region; the sequence is QMVPKGVNME…RQHYENSTHF (171 aa). The disordered stretch occupies residues 451 to 470; sequence QGQTLSKTQERQHYENSTHF. The segment covering 458-470 has biased composition (basic and acidic residues); that stretch reads TQERQHYENSTHF.

Belongs to the cation diffusion facilitator (CDF) transporter (TC 2.A.4) family. SLC30A subfamily. In terms of assembly, forms homodimers. Forms heterodimers and high-molecular weight oligomers with SLC30A3, SLC30A2 and SLC30A4; heterodimerization is mediated by covalent-bound tyrosine residues, occurs probably in a tissue-specific manner and could mediate the intracellular zinc transport activity into early endosomes and recycling endosomes. As to expression, specifically expressed in fetal liver and fetal brain.

Its subcellular location is the cell membrane. It is found in the golgi apparatus membrane. The protein localises to the recycling endosome membrane. It localises to the early endosome membrane. The catalysed reaction is Mn(2+)(out) + Ca(2+)(in) = Mn(2+)(in) + Ca(2+)(out). It catalyses the reaction Zn(2+)(in) = Zn(2+)(out). Functionally, calcium:manganese antiporter of the plasma membrane mediating the efflux of intracellular manganese coupled to an active extracellular calcium exchange. Required for intracellular manganese homeostasis, an essential cation for the function of several enzymes, including some crucially important for the metabolism of neurotransmitters and other neuronal metabolic pathways. Manganese can also be cytotoxic and induce oxidative stress, mitochondrial dysfunction and apoptosis. Could also have an intracellular zinc ion transporter activity, directly regulating intracellular zinc ion homeostasis and more indirectly various signaling pathway and biological processes. This Mus musculus (Mouse) protein is Calcium/manganese antiporter SLC30A10.